The following is a 131-amino-acid chain: Fumarate reductase subunit C (131 aa).

Helical transmembrane passes span 30–50, 58–78, and 109–129; these read EGTC…VFAL, AGFV…VTLI, and IVRG…AVAL.

The protein belongs to the FrdC family. As to quaternary structure, part of an enzyme complex containing four subunits: a flavoprotein (FrdA), an iron-sulfur protein (FrdB), and two hydrophobic anchor proteins (FrdC and FrdD).

Its subcellular location is the cell inner membrane. Functionally, two distinct, membrane-bound, FAD-containing enzymes are responsible for the catalysis of fumarate and succinate interconversion; fumarate reductase is used in anaerobic growth, and succinate dehydrogenase is used in aerobic growth. Anchors the catalytic components of the fumarate reductase complex to the cell inner membrane, binds quinones. The protein is Fumarate reductase subunit C of Proteus vulgaris.